Here is a 160-residue protein sequence, read N- to C-terminus: 6,7-dimethyl-8-ribityllumazine synthase (160 aa).

Residues W26, 59–61 (AVE), and 81–83 (VVI) contribute to the 5-amino-6-(D-ribitylamino)uracil site. 86–87 (GT) lines the (2S)-2-hydroxy-3-oxobutyl phosphate pocket. Residue H89 is the Proton donor of the active site. A 5-amino-6-(D-ribitylamino)uracil-binding site is contributed by F114. R128 contacts (2S)-2-hydroxy-3-oxobutyl phosphate.

This sequence belongs to the DMRL synthase family.

It carries out the reaction (2S)-2-hydroxy-3-oxobutyl phosphate + 5-amino-6-(D-ribitylamino)uracil = 6,7-dimethyl-8-(1-D-ribityl)lumazine + phosphate + 2 H2O + H(+). The protein operates within cofactor biosynthesis; riboflavin biosynthesis; riboflavin from 2-hydroxy-3-oxobutyl phosphate and 5-amino-6-(D-ribitylamino)uracil: step 1/2. Functionally, catalyzes the formation of 6,7-dimethyl-8-ribityllumazine by condensation of 5-amino-6-(D-ribitylamino)uracil with 3,4-dihydroxy-2-butanone 4-phosphate. This is the penultimate step in the biosynthesis of riboflavin. This Frankia casuarinae (strain DSM 45818 / CECT 9043 / HFP020203 / CcI3) protein is 6,7-dimethyl-8-ribityllumazine synthase.